Reading from the N-terminus, the 151-residue chain is Cytochrome c-type biogenesis protein CcmE (151 aa).

The Cytoplasmic segment spans residues 1–9 (MKGLKKKRR). The helical; Signal-anchor for type II membrane protein transmembrane segment at 10–30 (IQIIALAFVALAGSTALIGYA) threads the bilayer. Over 31–151 (MRDGINFFRS…FQHTEDQPQG (121 aa)) the chain is Periplasmic. Heme-binding residues include His123 and Tyr127.

This sequence belongs to the CcmE/CycJ family.

Its subcellular location is the cell inner membrane. Its function is as follows. Heme chaperone required for the biogenesis of c-type cytochromes. Transiently binds heme delivered by CcmC and transfers the heme to apo-cytochromes in a process facilitated by CcmF and CcmH. The polypeptide is Cytochrome c-type biogenesis protein CcmE (Cereibacter sphaeroides (strain ATCC 17029 / ATH 2.4.9) (Rhodobacter sphaeroides)).